The chain runs to 326 residues: ATP-dependent 6-phosphofructokinase 2 (326 aa).

Position 14 (glycine 14) interacts with ATP. Residue 24–28 (RAVTR) coordinates ADP. ATP contacts are provided by residues 75–76 (RC) and 105–108 (GDGS). Aspartate 106 is a binding site for Mg(2+). 129 to 131 (TID) contributes to the substrate binding site. Aspartate 131 serves as the catalytic Proton acceptor. An ADP-binding site is contributed by arginine 158. Substrate is bound by residues arginine 166 and 173 to 175 (MGR). Residues 189-191 (GAE), lysine 215, and 217-219 (KNS) contribute to the ADP site. Residues glutamate 226, arginine 250, and 256-259 (HLQR) contribute to the substrate site.

The protein belongs to the phosphofructokinase type A (PFKA) family. ATP-dependent PFK group I subfamily. Prokaryotic clade 'B1' sub-subfamily. Homotetramer. It depends on Mg(2+) as a cofactor.

The protein localises to the cytoplasm. It carries out the reaction beta-D-fructose 6-phosphate + ATP = beta-D-fructose 1,6-bisphosphate + ADP + H(+). Its pathway is carbohydrate degradation; glycolysis; D-glyceraldehyde 3-phosphate and glycerone phosphate from D-glucose: step 3/4. Allosterically activated by ADP and other diphosphonucleosides, and allosterically inhibited by phosphoenolpyruvate. In terms of biological role, catalyzes the phosphorylation of D-fructose 6-phosphate to fructose 1,6-bisphosphate by ATP, the first committing step of glycolysis. This Bacteroides thetaiotaomicron (strain ATCC 29148 / DSM 2079 / JCM 5827 / CCUG 10774 / NCTC 10582 / VPI-5482 / E50) protein is ATP-dependent 6-phosphofructokinase 2.